The primary structure comprises 77 residues: Short neurotoxin OH-32 (77 aa).

Residues 1–21 (MKNLLLTFLVVTIVCLDLGYT) form the signal peptide. 4 disulfide bridges follow: C24–C40, C33–C58, C62–C70, and C71–C76.

It belongs to the three-finger toxin family. Short-chain subfamily. Expressed by the venom gland.

It localises to the secreted. In terms of biological role, this three-finger toxin binds and inhibits the nicotinic acetylcholine receptor (nAChR). This Ophiophagus hannah (King cobra) protein is Short neurotoxin OH-32.